The chain runs to 487 residues: N-succinylglutamate 5-semialdehyde dehydrogenase (487 aa).

221 to 226 (GSSRTG) serves as a coordination point for NAD(+). Catalysis depends on residues E244 and C278.

Belongs to the aldehyde dehydrogenase family. AstD subfamily.

It carries out the reaction N-succinyl-L-glutamate 5-semialdehyde + NAD(+) + H2O = N-succinyl-L-glutamate + NADH + 2 H(+). Its pathway is amino-acid degradation; L-arginine degradation via AST pathway; L-glutamate and succinate from L-arginine: step 4/5. Catalyzes the NAD-dependent reduction of succinylglutamate semialdehyde into succinylglutamate. This is N-succinylglutamate 5-semialdehyde dehydrogenase from Pseudomonas putida (strain ATCC 47054 / DSM 6125 / CFBP 8728 / NCIMB 11950 / KT2440).